A 248-amino-acid chain; its full sequence is Probable septum site-determining protein MinC (248 aa).

Positions 94 to 125 (GMPPAMRGGQPAADFEAPAGEPQANPGAPEPQ) are disordered.

Belongs to the MinC family. Interacts with MinD and FtsZ.

Its function is as follows. Cell division inhibitor that blocks the formation of polar Z ring septums. Rapidly oscillates between the poles of the cell to destabilize FtsZ filaments that have formed before they mature into polar Z rings. Prevents FtsZ polymerization. In Brucella abortus (strain S19), this protein is Probable septum site-determining protein MinC.